Reading from the N-terminus, the 1235-residue chain is Serine/threonine-protein kinase TAO2 (1235 aa).

S9 is modified (phosphoserine). Positions 28–281 constitute a Protein kinase domain; it reads FSDLREIGHG…SEVLLKHRFV (254 aa). ATP contacts are provided by residues 34-42 and K57; that span reads IGHGSFGAV. D151 serves as the catalytic Proton acceptor. S181 carries the post-translational modification Phosphoserine. Residues 318 to 457 form a disordered region; it reads QEAPNGPGAE…TSTTSSARRR (140 aa). Positions 350–374 are enriched in low complexity; the sequence is SSHSVPSMSISASSQSSSVNSLADA. The span at 375–393 shows a compositional bias: acidic residues; the sequence is SDNEEEEEEEEEEEEEEEG. Residues 394 to 409 show a composition bias toward basic and acidic residues; that stretch reads PEAREMAMMQEGEHTV. Phosphoserine is present on S414. 2 coiled-coil regions span residues 486-547 and 574-601; these read SALR…RRHQ and KELAALLEAQKRTYKLRKEQLKEELQEN. S656 is modified (phosphoserine). Residues 681–713 are a coiled coil; it reads LRQHEATRELELRQLQAVQRTRAELTRLQHQTE. Disordered regions lie at residues 732-777, 804-835, and 891-939; these read HAAQ…QPCS, KEGATLEPKQQRILGEESGAPSPSPQKHGSLV, and QGPA…RPCP. Residues 766 to 777 are compositionally biased toward polar residues; it reads NTGTPIEQQPCS. A phosphoserine mark is found at S777, S825, and S827. The segment covering 899-908 has biased composition (acidic residues); sequence PEEEEEEEEG. The segment covering 924–934 has biased composition (pro residues); sequence PDIPPEPPPTH. 2 consecutive transmembrane segments (helical) span residues 965-985 and 987-1007; these read LLPLLLLLLLPLLAAQGGGGL and AALLALEVGLVGLGASYLLLC. A phosphoserine mark is found at H1011 and G1031. 3 helical membrane-spanning segments follow: residues 1012–1032, 1043–1063, and 1166–1186; these read LPSSLFLLLAQGTALGAVLGL, LGLGAAWLLAWPGLALPLVAM, and QGLASHLPPWAIHTLASWGLL. Residues 1198–1235 form a disordered region; the sequence is LPRSQRQLGPPASRQPLPGTLAGRRSRTRQSRALPPWR.

This sequence belongs to the protein kinase superfamily. STE Ser/Thr protein kinase family. STE20 subfamily. Interacts with MAP2K3 and MAP2K6. Self-associates. Interacts with tubulins through the C-terminal domain. Interacts with MAP3K7 and interferes with MAP3K7-binding to CHUK and thus prevents NF-kappa-B activation. Isoform 2 interacts with PCDH8; this complex may also include CDH2. Requires Mg(2+) as cofactor. In terms of processing, isoforms 1 and 2 are autophosphorylated. Post-translationally, C-terminal cleavage of isoform 1 and subsequent nuclear localization requires CASP9 activity. Autophosphorylated. Phosphorylated by ATM. In terms of processing, phosphorylated on Ser-1031 by MAPK14. This phosphorylation is required PCDH8 for endocytosis. As to expression, ubiquitously expressed, with a higher level of expression in testis and brain.

It is found in the cytoplasmic vesicle membrane. It localises to the cytoplasm. Its subcellular location is the cytoskeleton. The protein resides in the nucleus. The protein localises to the cell projection. It is found in the dendrite. The catalysed reaction is L-seryl-[protein] + ATP = O-phospho-L-seryl-[protein] + ADP + H(+). It catalyses the reaction L-threonyl-[protein] + ATP = O-phospho-L-threonyl-[protein] + ADP + H(+). Its activity is regulated as follows. Selectively inhibited by the enantiopure organoruthenium inhibitor 9E1. Activated following arsenic trioxide (As(2)O(3)) treatment. Serine/threonine-protein kinase involved in different processes such as membrane blebbing and apoptotic bodies formation DNA damage response and MAPK14/p38 MAPK stress-activated MAPK cascade. Phosphorylates itself, MBP, activated MAPK8, MAP2K3, MAP2K6 and tubulins. Activates the MAPK14/p38 MAPK signaling pathway through the specific activation and phosphorylation of the upstream MAP2K3 and MAP2K6 kinases. In response to DNA damage, involved in the G2/M transition DNA damage checkpoint by activating the p38/MAPK14 stress-activated MAPK cascade, probably by mediating phosphorylation of upstream MAP2K3 and MAP2K6 kinases. Isoform 1, but not isoform 2, plays a role in apoptotic morphological changes, including cell contraction, membrane blebbing and apoptotic bodies formation. This function, which requires the activation of MAPK8/JNK and nuclear localization of C-terminally truncated isoform 1, may be linked to the mitochondrial CASP9-associated death pathway. Isoform 1 binds to microtubules and affects their organization and stability independently of its kinase activity. Prevents MAP3K7-mediated activation of CHUK, and thus NF-kappa-B activation, but not that of MAPK8/JNK. May play a role in the osmotic stress-MAPK8 pathway. Isoform 2, but not isoform 1, is required for PCDH8 endocytosis. Following homophilic interactions between PCDH8 extracellular domains, isoform 2 phosphorylates and activates MAPK14/p38 MAPK which in turn phosphorylates isoform 2. This process leads to PCDH8 endocytosis and CDH2 cointernalization. Both isoforms are involved in MAPK14 phosphorylation. This chain is Serine/threonine-protein kinase TAO2 (TAOK2), found in Homo sapiens (Human).